The sequence spans 68 residues: Large ribosomal subunit protein uL29 (68 aa).

This sequence belongs to the universal ribosomal protein uL29 family.

This Picosynechococcus sp. (strain ATCC 27264 / PCC 7002 / PR-6) (Agmenellum quadruplicatum) protein is Large ribosomal subunit protein uL29.